Here is a 502-residue protein sequence, read N- to C-terminus: Protein krueppel (502 aa).

Disordered regions lie at residues 115 to 164 (PPQG…KLSV) and 178 to 202 (DMYH…THDG). Composition is skewed to low complexity over residues 119 to 136 (THLH…STPL) and 183 to 198 (SGGP…SPNS). C2H2-type zinc fingers lie at residues 222-244 (FTCK…ERTH), 250-272 (FECP…MRLH), 278-300 (YHCS…LRVH), 306-328 (YTCE…MLVH), and 334-354 (FECE…NHKC). Disordered regions lie at residues 399-427 (NESV…SVDG) and 445-502 (RLPP…HQQH). A compositionally biased stretch (acidic residues) spans 410 to 419 (EDDGPLDLSE). Phosphoserine occurs at positions 468, 471, and 477. The span at 482–491 (DDIDLYDLDD) shows a compositional bias: acidic residues.

This sequence belongs to the krueppel C2H2-type zinc-finger protein family.

Its subcellular location is the nucleus. Functionally, krueppel is a gap class segmentation protein. It is involved in the segmentation of the embryo and in the differentiation of the Malpighian tubules. The protein is Protein krueppel (Kr) of Drosophila melanogaster (Fruit fly).